The following is a 933-amino-acid chain: MPRHHAGGEEGGAAGLWVRSGAAAAAGAGGGRPGSGMKDVESGRGRVLLNSAAARGDGLLLLGTRAAALGGGGGGLRESRRGKQGARMSLLGKPLSYTSSQSCRRNVKYRRVQNYLYNVLERPRGWAFVYHAFVFLLVFGCLILSVFSTIPEHTKLASSCLLILEFVMIVVFGLEFIIRIWSAGCCCRYRGWQGRLRFARKPFCVIDTIVLIASIAVVSAKTQGNIFATSALRSLRFLQILRMVRMDRRGGTWKLLGSVVYAHSKELITAWYIGFLVLIFSSFLVYLVEKDANKEFSTYADALWWGTITLTTIGYGDKTPLTWLGRLLSAGFALLGISFFALPAGILGSGFALKVQEQHRQKHFEKRRNPAANLIQCVWRSYAADEKSVSIATWKPHLKALHTCSPTKKEQGEASSSQKLSFKERVRMASPRGQSIKSRQASVGDRRSPSTDITAEGSPTKVQKSWSFNDRTRFRPSLRLKSSQPKPVIDADTALGIDDVYDEKGCQCDVSVEDLTPPLKTVIRAIRIMKFHVAKRKFKETLRPYDVKDVIEQYSAGHLDMLCRIKSLQTRVDQILGKGQMTSDKKSREKITAEHETTDDPSMLARVVKVEKQVQSIESKLDCLLDIYQQVLRKGSASALTLASFQIPPFECEQTSDYQSPVDSKDLSGSAQNSGCLTRSASANISRGLQFILTPNEFSAQTFYALSPTMHSQATQVPMSQNDGSSVVATNNIANQISAAPKPAAPTTLQIPPPLSAIKHLSRPEPLLSNPTGLQESISDVTTCLVASKESVQFAQSNLTKDRSLRKSFDMGGETLLSVRPMVPKDLGKSLSVQNLIRSTEELNLQFSGSESSGSRGSQDFYPKWRESKLFITDEEVGAEETETDTFDGTPPPAGEAAFSSDSLRTGRSRSSQNICKTGDSTDALSLPHVKLN.

The Cytoplasmic segment spans residues 1 to 126; that stretch reads MPRHHAGGEE…YNVLERPRGW (126 aa). A Phosphoserine modification is found at serine 89. The helical transmembrane segment at 127–147 threads the bilayer; that stretch reads AFVYHAFVFLLVFGCLILSVF. At 148 to 157 the chain is on the extracellular side; sequence STIPEHTKLA. The chain crosses the membrane as a helical span at residues 158–178; the sequence is SSCLLILEFVMIVVFGLEFII. The Cytoplasmic portion of the chain corresponds to 179–201; the sequence is RIWSAGCCCRYRGWQGRLRFARK. A helical membrane pass occupies residues 202-222; the sequence is PFCVIDTIVLIASIAVVSAKT. Over 223–230 the chain is Extracellular; sequence QGNIFATS. The chain crosses the membrane as a helical; Voltage-sensor span at residues 231-253; it reads ALRSLRFLQILRMVRMDRRGGTW. A 1,2-diacyl-sn-glycero-3-phospho-(1D-myo-inositol-4,5-bisphosphate) is bound by residues arginine 249 and lysine 265. Over 254–267 the chain is Cytoplasmic; sequence KLLGSVVYAHSKEL. A helical transmembrane segment spans residues 268–288; the sequence is ITAWYIGFLVLIFSSFLVYLV. Topologically, residues 289–299 are extracellular; the sequence is EKDANKEFSTY. The segment at residues 300–320 is an intramembrane region (pore-forming); that stretch reads ADALWWGTITLTTIGYGDKTP. At 321 to 326 the chain is on the extracellular side; that stretch reads LTWLGR. Residues 327–347 form a helical membrane-spanning segment; the sequence is LLSAGFALLGISFFALPAGIL. Residues 348-933 are Cytoplasmic-facing; sequence GSGFALKVQE…ALSLPHVKLN (586 aa). Lysine 362 is an a 1,2-diacyl-sn-glycero-3-phospho-(1D-myo-inositol-4,5-bisphosphate) binding site. Residues 371 to 379 are interaction with CALM; that stretch reads AANLIQCVW. Residues 405–465 form a disordered region; that stretch reads SPTKKEQGEA…EGSPTKVQKS (61 aa). Positions 432 to 441 are enriched in polar residues; the sequence is RGQSIKSRQA. Residue serine 448 is modified to Phosphoserine. The interval 522 to 529 is interaction with CALM; the sequence is VIRAIRIM. Residues 578–598 form a disordered region; it reads KGQMTSDKKSREKITAEHETT. Positions 583–598 are enriched in basic and acidic residues; it reads SDKKSREKITAEHETT. The residue at position 832 (serine 832) is a Phosphoserine. The disordered stretch occupies residues 878–933; the sequence is GAEETETDTFDGTPPPAGEAAFSSDSLRTGRSRSSQNICKTGDSTDALSLPHVKLN. The segment covering 900–924 has biased composition (polar residues); that stretch reads SSDSLRTGRSRSSQNICKTGDSTDA.

The protein belongs to the potassium channel family. KQT (TC 1.A.1.15) subfamily. Kv7.5/KCNQ5 sub-subfamily. As to quaternary structure, homotetramer; forms a functional homotetrameric channel resulting in the expression of a small M-current. Heterotetramer with KCNQ3; forms heterotetrameric M-channel responsible for the native M-current. Heterotetramer with KCNQ1; forms a functional voltage-gated potassium channel. Interacts (via C-terminus) with calmodulin/CALM; forms a heterooctameric structure (with 4:4 KCNQ1:CALM stoichiometry); the interaction is calcium-independent, constitutive and participates in the channel function. As to expression, strongly expressed in brain. Also expressed in colon, lung and uterus.

It localises to the cell membrane. The catalysed reaction is K(+)(in) = K(+)(out). Its activity is regulated as follows. Phosphatidylinositol-4,5-bisphosphate (PIP2) is essential to activate KCNQ5 channel by inducing the coupling of the voltage-sensing domain (VSD) and the pore-forming domain (PD). Calcium suppresses KCNQ5 channel current through calcium-bound CALM C-terminus. Therefore CALM acts as calcium sensor that controls channel activity. Zinc potentiates channel activity in a pH-dependent manner. The activity is modulated by small changes in cell volume. Activated by the anticonvulsant retigabine. Inhibited by linopirdine and XE991. Pore-forming subunit of the voltage-gated potassium (Kv) channel broadly expressed in brain and skeletal muscle and involved in the regulation of neuronal excitability. Associates with KCNQ3/Kv7.3 pore-forming subunit to form a potassium channel which contributes to M-type current, a slowly activating and deactivating potassium conductance which plays a critical role in determining the subthreshold electrical excitability of neurons. Contributes, with other potassium channels, to the molecular diversity of a heterogeneous population of M-channels, varying in kinetic and pharmacological properties, which underlie this physiologically important current. Also forms a functional channel with KCNQ1/Kv7.1 subunit that may contribute to vasoconstriction and hypertension. Channel may be selectively permeable in vitro to other cations besides potassium, in decreasing order of affinity K(+) = Rb(+) &gt; Cs(+) &gt; Na(+). In Mus musculus (Mouse), this protein is Potassium voltage-gated channel subfamily KQT member 5.